The chain runs to 429 residues: Gamma-glutamyl phosphate reductase (429 aa).

The protein belongs to the gamma-glutamyl phosphate reductase family.

It is found in the cytoplasm. The enzyme catalyses L-glutamate 5-semialdehyde + phosphate + NADP(+) = L-glutamyl 5-phosphate + NADPH + H(+). Its pathway is amino-acid biosynthesis; L-proline biosynthesis; L-glutamate 5-semialdehyde from L-glutamate: step 2/2. Functionally, catalyzes the NADPH-dependent reduction of L-glutamate 5-phosphate into L-glutamate 5-semialdehyde and phosphate. The product spontaneously undergoes cyclization to form 1-pyrroline-5-carboxylate. The sequence is that of Gamma-glutamyl phosphate reductase from Bradyrhizobium sp. (strain BTAi1 / ATCC BAA-1182).